We begin with the raw amino-acid sequence, 192 residues long: Probable nicotinate-nucleotide adenylyltransferase (192 aa).

Belongs to the NadD family.

The enzyme catalyses nicotinate beta-D-ribonucleotide + ATP + H(+) = deamido-NAD(+) + diphosphate. Its pathway is cofactor biosynthesis; NAD(+) biosynthesis; deamido-NAD(+) from nicotinate D-ribonucleotide: step 1/1. Its function is as follows. Catalyzes the reversible adenylation of nicotinate mononucleotide (NaMN) to nicotinic acid adenine dinucleotide (NaAD). This chain is Probable nicotinate-nucleotide adenylyltransferase, found in Rhizobium leguminosarum bv. trifolii (strain WSM2304).